We begin with the raw amino-acid sequence, 101 residues long: MVDISRELQVAISTGKVVMGFKEVKKTILTSTPKLVILAANAPKWAKEDVEYYAKLAGVPVFIFPGSSIELGAAAKRPHKIMALAVIDPGQSEILKLVEHA.

It belongs to the eukaryotic ribosomal protein eL30 family.

The protein is Large ribosomal subunit protein eL30 of Pyrobaculum islandicum (strain DSM 4184 / JCM 9189 / GEO3).